The primary structure comprises 377 residues: Opsin, blue-sensitive (377 aa).

Over 1-56 (MLLHNKTLAGKALAFIAEEGYVPSMREKFLGWNVPPEYSDLVHPHWRAFPAPGKHF) the chain is Extracellular. Asparagine 5 carries N-linked (GlcNAc...) asparagine glycosylation. The chain crosses the membrane as a helical span at residues 57 to 81 (HIGLAIIYSMLLIMSLVGNCCVIWI). Residues 82–93 (FSTSKSLRTPSN) lie on the Cytoplasmic side of the membrane. The chain crosses the membrane as a helical span at residues 94–119 (MFIVSLAIFDIIMAFEMPMLVISSFM). The Extracellular segment spans residues 120–132 (ERMIGWEIGCDVY). Cysteine 129 and cysteine 206 are oxidised to a cystine. The chain crosses the membrane as a helical span at residues 133–152 (SVFGSISGMGQAMTNAAIAF). Topologically, residues 153–170 (DRYRTISCPIDGRLNSKQ) are cytoplasmic. The helical transmembrane segment at 171–195 (AAVIIAFTWFWVTPFTVLPLLKVWG) threads the bilayer. The Extracellular portion of the chain corresponds to 196–219 (RYTTEGFLTTCSFDFLTDDEDTKV). The chain crosses the membrane as a helical span at residues 220–247 (FVTCIFIWAYVIPLIFIILFYSRLLSSI). Over 248 to 282 (RNHEKMLREQAKKMNVKSLVSNQDKERSAEVRIAK) the chain is Cytoplasmic. A helical membrane pass occupies residues 283 to 306 (VAFTIFFLFLLAWTPYATVALIGV). Residues 307-314 (YGNRELLT) lie on the Extracellular side of the membrane. Residues 315 to 339 (PVSTMLPAVFAKTVSCIDPWIYAIN) traverse the membrane as a helical segment. Lysine 326 carries the N6-(retinylidene)lysine modification. Over 340–377 (HPRYRQELQKRCKWMGIHEPETTSDATSAQTEKIKTDE) the chain is Cytoplasmic.

It belongs to the G-protein coupled receptor 1 family. Opsin subfamily. Phosphorylated on some or all of the serine and threonine residues present in the C-terminal region. As to expression, expressed in the dorsal region of the retina and sparsely expressed in the ventral region.

It localises to the membrane. Functionally, visual pigments are the light-absorbing molecules that mediate vision. They consist of an apoprotein, opsin, covalently linked to 11-cis-retinal. In Apis mellifera (Honeybee), this protein is Opsin, blue-sensitive (BLOP).